The chain runs to 167 residues: Signal peptidase complex subunit 3A (167 aa).

Residues 1-11 (MHTFGYRANAL) lie on the Cytoplasmic side of the membrane. A helical; Signal-anchor for type II membrane protein transmembrane segment spans residues 12 to 32 (LTFAVTALAFICAIASFSDKF). Residues 33 to 167 (SNQNPSAEIQ…PGYSLPDAYR (135 aa)) are Lumenal-facing. An N-linked (GlcNAc...) asparagine glycan is attached at N136.

The protein belongs to the SPCS3 family. As to quaternary structure, component of the signal peptidase complex (SPC) composed of a catalytic subunit SEC11 and three accessory subunits SPCS1, SPCS2 and SPCS3. The complex induces a local thinning of the ER membrane which is used to measure the length of the signal peptide (SP) h-region of protein substrates. This ensures the selectivity of the complex towards h-regions shorter than 18-20 amino acids.

Its subcellular location is the endoplasmic reticulum membrane. Functionally, essential component of the signal peptidase complex (SPC) which catalyzes the cleavage of N-terminal signal sequences from nascent proteins as they are translocated into the lumen of the endoplasmic reticulum. Essential for the SPC catalytic activity, possibly by stabilizing and positioning the active center of the complex close to the lumenal surface. This is Signal peptidase complex subunit 3A from Arabidopsis thaliana (Mouse-ear cress).